We begin with the raw amino-acid sequence, 240 residues long: Small ribosomal subunit protein uS2 (240 aa).

This sequence belongs to the universal ribosomal protein uS2 family. As to quaternary structure, component of the small ribosomal subunit. Mature ribosomes consist of a small (40S) and a large (60S) subunit. The 40S subunit contains about 33 different proteins and 1 molecule of RNA (18S). The 60S subunit contains about 49 different proteins and 3 molecules of RNA (25S, 5.8S and 5S). Interacts with RPS21.

Its subcellular location is the cytoplasm. Required for the assembly and/or stability of the 40S ribosomal subunit. Required for the processing of the 20S rRNA-precursor to mature 18S rRNA in a late step of the maturation of 40S ribosomal subunits. The polypeptide is Small ribosomal subunit protein uS2 (Enterocytozoon bieneusi (strain H348) (Microsporidian parasite)).